We begin with the raw amino-acid sequence, 152 residues long: Interleukin-1 family member 10 (152 aa).

It belongs to the IL-1 family. Interacts with cargo receptor TMED10; the interaction mediates the translocation from the cytoplasm into the ERGIC (endoplasmic reticulum-Golgi intermediate compartment) and thereby secretion.

The protein localises to the cytoplasm. The protein resides in the endoplasmic reticulum-Golgi intermediate compartment. It is found in the secreted. In terms of biological role, cytokine with immunomodulatory activity. Alone, does not induce cytokine production, but reduces IL22 and IL17A production by T-cells in response to heat-killed Candida albicans. Reduces IL36G-induced production of IL8 by peripheral blood mononuclear cells. Increases IL6 production by dendritic cells stimulated by bacterial lipopolysaccharides (LPS). Ligand for IL-36R/IL1RL2. In Mus musculus (Mouse), this protein is Interleukin-1 family member 10 (Il1f10).